A 111-amino-acid polypeptide reads, in one-letter code: Cyanovirin-N homolog (111 aa).

The protein belongs to the cyanovirin-N family.

Functionally, mannose-binding lectin. In Neurospora crassa (strain ATCC 24698 / 74-OR23-1A / CBS 708.71 / DSM 1257 / FGSC 987), this protein is Cyanovirin-N homolog.